The chain runs to 101 residues: MAKKSLIVREYKKNILVNKYYKKRLLLKSQLNNTINSTDCILKILNKLQKLPKKSSPTKLRNRCTLTGRARGVYSEYKISRFVFRNLALNGLLPGVFKASW.

It belongs to the universal ribosomal protein uS14 family. In terms of assembly, part of the 30S ribosomal subunit.

It is found in the plastid. In terms of biological role, binds 16S rRNA, required for the assembly of 30S particles. The sequence is that of Small ribosomal subunit protein uS14c from Helicosporidium sp. subsp. Simulium jonesii (Green alga).